Here is a 392-residue protein sequence, read N- to C-terminus: GTPase Obg (392 aa).

One can recognise an Obg domain in the interval M1 to L159. The segment at N127–D148 is disordered. The segment covering R129–M143 has biased composition (polar residues). The OBG-type G domain maps to A160–I333. Residues G166–S173, F191–V195, D213–G216, N283–D286, and S314–A316 contribute to the GTP site. Mg(2+) is bound by residues S173 and T193. A compositionally biased stretch (acidic residues) spans E362 to V386. Residues E362–R392 are disordered.

This sequence belongs to the TRAFAC class OBG-HflX-like GTPase superfamily. OBG GTPase family. In terms of assembly, monomer. Requires Mg(2+) as cofactor.

The protein localises to the cytoplasm. In terms of biological role, an essential GTPase which binds GTP, GDP and possibly (p)ppGpp with moderate affinity, with high nucleotide exchange rates and a fairly low GTP hydrolysis rate. Plays a role in control of the cell cycle, stress response, ribosome biogenesis and in those bacteria that undergo differentiation, in morphogenesis control. The chain is GTPase Obg from Klebsiella pneumoniae subsp. pneumoniae (strain ATCC 700721 / MGH 78578).